Here is a 114-residue protein sequence, read N- to C-terminus: SCP2 domain-containing protein YusD (114 aa).

Residues 21–101 (NASTLLITFQ…RALLKLEAIL (81 aa)) form the SCP2 domain.

The chain is SCP2 domain-containing protein YusD (yusD) from Bacillus subtilis (strain 168).